We begin with the raw amino-acid sequence, 334 residues long: Catabolite repressor/activator (334 aa).

The HTH lacI-type domain occupies 1-58 (MKLDEIARLAGVSRTTASYVINGKAKQYRVSDKTVEKVMAVVREHNYHPNAVAAGLRA). A DNA-binding region (H-T-H motif) is located at residues 3-22 (LDEIARLAGVSRTTASYVIN).

Homotetramer.

Global transcriptional regulator, which plays an important role in the regulation of carbon metabolism. In Salmonella typhimurium (strain LT2 / SGSC1412 / ATCC 700720), this protein is Catabolite repressor/activator (cra).